Reading from the N-terminus, the 97-residue chain is YcgL domain-containing protein PFLU_1517 (97 aa).

In terms of domain architecture, YcgL spans 3 to 87 (RICSIYRSKK…AEDEYIEHLP (85 aa)).

This chain is YcgL domain-containing protein PFLU_1517, found in Pseudomonas fluorescens (strain SBW25).